Consider the following 228-residue polypeptide: MAAAAAAKIAPSMLSSDFANLAAEADRMVRLGADWLHMDIMDGHFVPNLTIGAPVIQSLRKHTKAYLDCHLMVTNPSDYVEPLAKAGASGFTFHIEVSRDNWQELIQSIKAKGMRPGVSLRPGTPVEEVFPLVEAENPVELVLVMTVEPGFGGQKFMPEMMEKVRALRKKYPSLDIEVDGGLGPSTIDVAASAGANCIVAGSSIFGAAEPGEVISALRKSVEGSQNKS.

Residue serine 12 participates in substrate binding. The a divalent metal cation site is built by histidine 37, aspartate 39, and histidine 70. Aspartate 39 (proton acceptor) is an active-site residue. Substrate is bound by residues histidine 70, 150–153 (GFGG), 179–181 (DGG), and 201–202 (GS). Residue aspartate 179 participates in a divalent metal cation binding. The Proton donor role is filled by aspartate 179.

This sequence belongs to the ribulose-phosphate 3-epimerase family. Homodimer. Co(2+) is required as a cofactor. It depends on Fe(2+) as a cofactor. The cofactor is Mn(2+). Zn(2+) serves as cofactor. Predominantly accumulates in roots and seedlings.

It is found in the cytoplasm. It carries out the reaction D-ribulose 5-phosphate = D-xylulose 5-phosphate. It participates in carbohydrate degradation; pentose phosphate pathway; D-xylulose 5-phosphate from D-ribulose 5-phosphate (non-oxidative stage): step 1/1. Catalyzes the reversible epimerization of D-ribulose 5-phosphate to D-xylulose 5-phosphate. In Oryza sativa subsp. japonica (Rice), this protein is Ribulose-phosphate 3-epimerase, cytoplasmic isoform.